Reading from the N-terminus, the 173-residue chain is Monothiol glutaredoxin-S14, chloroplastic (173 aa).

The N-terminal 63 residues, 1-63 (MALRSVKTPT…KLKPTKFRCS (63 aa)), are a transit peptide targeting the chloroplast. A Glutaredoxin domain is found at 72–173 (KDTLEKLVNS…QEEVEKAMCS (102 aa)). K89 is a binding site for glutathione. [2Fe-2S] cluster-binding residues include C97 and F99. C97 is subject to S-glutathionyl cysteine. Positions 97–100 (CGFS) are required for CAX1 activation. Glutathione-binding residues include R126 and K130. The segment at 133-137 (SNWPT) is required for CAX1 activation. Residues F138 and 151–152 (CD) contribute to the glutathione site.

Belongs to the glutaredoxin family. CGFS subfamily. In terms of assembly, [2Fe-2S]-bridged holo-homodimer. Interacts with N-terminal part of CAX1 in yeast. Interacts in vitro with SUFE1, BOLA1, BOLA2 and BOLA4. Interacts in vivo only with SUFE1, BOLA1 and BOLA4. Interacts with SBP1. As to expression, highly expressed in leaves, at intermediate levels in stems and at lower levels in roots and flowers.

It localises to the plastid. The protein resides in the chloroplast. Functionally, may only reduce GSH-thiol disulfides, but not protein disulfides (Potential). Probably involved in the regulation of the redox state of the BOLA proteins (Potential). May act as Fe-S cluster donors to Fe-S cluster-requiring proteins. May protect cells against protein oxidative damage. May regulate CAX cation transporters. The GRXS14-BOLA1 heterodimer binds a labile, oxygen sensitive Fe-S cluster. This Arabidopsis thaliana (Mouse-ear cress) protein is Monothiol glutaredoxin-S14, chloroplastic.